Consider the following 415-residue polypeptide: Mitochondrial tRNA-specific 2-thiouridylase 1 (415 aa).

Residues 37–44 (AMSGGVDS) and Met-63 contribute to the ATP site. The tract at residues 124–126 (NPD) is interaction with target base in tRNA. The Nucleophile role is filled by Cys-129. A disulfide bond links Cys-129 and Cys-234. An ATP-binding site is contributed by Gly-159. The interval 183 to 185 (KDQ) is interaction with tRNA. The Cysteine persulfide intermediate role is filled by Cys-234. Residues 356–357 (RH) form an interaction with tRNA region.

It belongs to the MnmA/TRMU family.

It localises to the mitochondrion. The enzyme catalyses 5-taurinomethyluridine(34) in tRNA + S-sulfanyl-L-cysteinyl-[protein] + AH2 + ATP = 5-taurinomethyl-2-thiouridine(34) in tRNA + L-cysteinyl-[protein] + A + AMP + diphosphate + H(+). Catalyzes the 2-thiolation of uridine at the wobble position (U34) of mitochondrial tRNA(Lys), tRNA(Glu) and tRNA(Gln). Required for the formation of 5-taurinomethyl-2-thiouridine (tm5s2U) of mitochondrial tRNA(Lys), tRNA(Glu), and tRNA(Gln) at the wobble position. ATP is required to activate the C2 atom of the wobble base. The protein is Mitochondrial tRNA-specific 2-thiouridylase 1 of Schizosaccharomyces pombe (strain 972 / ATCC 24843) (Fission yeast).